Here is a 69-residue protein sequence, read N- to C-terminus: Large ribosomal subunit protein bL31 (69 aa).

Positions 16, 18, 36, and 39 each coordinate Zn(2+).

Belongs to the bacterial ribosomal protein bL31 family. Type A subfamily. In terms of assembly, part of the 50S ribosomal subunit. Zn(2+) is required as a cofactor.

Its function is as follows. Binds the 23S rRNA. This chain is Large ribosomal subunit protein bL31, found in Ruminiclostridium cellulolyticum (strain ATCC 35319 / DSM 5812 / JCM 6584 / H10) (Clostridium cellulolyticum).